Reading from the N-terminus, the 695-residue chain is Phosphate acetyltransferase (695 aa).

The segment at 372 to 695 (AFRYRLVKRA…LTAVQAASQR (324 aa)) is phosphate acetyltransferase.

The protein in the N-terminal section; belongs to the CobB/CobQ family. In the C-terminal section; belongs to the phosphate acetyltransferase and butyryltransferase family. In terms of assembly, homohexamer.

The protein localises to the cytoplasm. The catalysed reaction is acetyl-CoA + phosphate = acetyl phosphate + CoA. It functions in the pathway metabolic intermediate biosynthesis; acetyl-CoA biosynthesis; acetyl-CoA from acetate: step 2/2. Involved in acetate metabolism. The chain is Phosphate acetyltransferase (pta) from Nitrosomonas europaea (strain ATCC 19718 / CIP 103999 / KCTC 2705 / NBRC 14298).